Reading from the N-terminus, the 426-residue chain is NADH-quinone oxidoreductase subunit D 1 (426 aa).

Residues 1–51 form a disordered region; that stretch reads MATEFTVPDSAARIATAQQAGGGTPVRSGPPDEGGEFSGDRMSLSMGPSHP.

This sequence belongs to the complex I 49 kDa subunit family. As to quaternary structure, NDH-1 is composed of 14 different subunits. Subunits NuoB, C, D, E, F, and G constitute the peripheral sector of the complex.

It localises to the cell inner membrane. The enzyme catalyses a quinone + NADH + 5 H(+)(in) = a quinol + NAD(+) + 4 H(+)(out). Its function is as follows. NDH-1 shuttles electrons from NADH, via FMN and iron-sulfur (Fe-S) centers, to quinones in the respiratory chain. The immediate electron acceptor for the enzyme in this species is believed to be ubiquinone. Couples the redox reaction to proton translocation (for every two electrons transferred, four hydrogen ions are translocated across the cytoplasmic membrane), and thus conserves the redox energy in a proton gradient. The polypeptide is NADH-quinone oxidoreductase subunit D 1 (Opitutus terrae (strain DSM 11246 / JCM 15787 / PB90-1)).